The following is a 473-amino-acid chain: Sulfate adenylyltransferase subunit 1 (473 aa).

In terms of domain architecture, tr-type G spans 19–238 (KTLLKFLTCG…IKIKNSISSE (220 aa)). The interval 28-35 (GSVDDGKS) is G1. A GTP-binding site is contributed by 28–35 (GSVDDGKS). The tract at residues 86–90 (GITID) is G2. The G3 stretch occupies residues 107-110 (DTPG). GTP is bound by residues 107–111 (DTPGH) and 162–165 (NKMD). Positions 162–165 (NKMD) are G4. The tract at residues 200–202 (SAL) is G5.

This sequence belongs to the TRAFAC class translation factor GTPase superfamily. Classic translation factor GTPase family. CysN/NodQ subfamily. Heterodimer composed of CysD, the smaller subunit, and CysN.

The enzyme catalyses sulfate + ATP + H(+) = adenosine 5'-phosphosulfate + diphosphate. Its pathway is sulfur metabolism; hydrogen sulfide biosynthesis; sulfite from sulfate: step 1/3. Functionally, with CysD forms the ATP sulfurylase (ATPS) that catalyzes the adenylation of sulfate producing adenosine 5'-phosphosulfate (APS) and diphosphate, the first enzymatic step in sulfur assimilation pathway. APS synthesis involves the formation of a high-energy phosphoric-sulfuric acid anhydride bond driven by GTP hydrolysis by CysN coupled to ATP hydrolysis by CysD. In Buchnera aphidicola subsp. Acyrthosiphon pisum (strain 5A), this protein is Sulfate adenylyltransferase subunit 1.